A 477-amino-acid chain; its full sequence is Putative BTB/POZ domain-containing protein R830 (477 aa).

Residues 13-83 (SDLELILVDK…FYGIETNNDP (71 aa)) enclose the BTB domain.

The protein belongs to the mimivirus BTB/WD family.

The protein is Putative BTB/POZ domain-containing protein R830 of Acanthamoeba polyphaga mimivirus (APMV).